We begin with the raw amino-acid sequence, 301 residues long: 4-hydroxy-tetrahydrodipicolinate synthase (301 aa).

Position 46 (Thr46) interacts with pyruvate. Tyr134 serves as the catalytic Proton donor/acceptor. Lys162 serves as the catalytic Schiff-base intermediate with substrate. Residue Ile203 coordinates pyruvate.

Belongs to the DapA family. In terms of assembly, homotetramer; dimer of dimers.

The protein resides in the cytoplasm. The catalysed reaction is L-aspartate 4-semialdehyde + pyruvate = (2S,4S)-4-hydroxy-2,3,4,5-tetrahydrodipicolinate + H2O + H(+). It functions in the pathway amino-acid biosynthesis; L-lysine biosynthesis via DAP pathway; (S)-tetrahydrodipicolinate from L-aspartate: step 3/4. Its function is as follows. Catalyzes the condensation of (S)-aspartate-beta-semialdehyde [(S)-ASA] and pyruvate to 4-hydroxy-tetrahydrodipicolinate (HTPA). The protein is 4-hydroxy-tetrahydrodipicolinate synthase of Anaplasma marginale (strain St. Maries).